The chain runs to 857 residues: DNA mismatch repair protein MutS (857 aa).

621 to 628 serves as a coordination point for ATP; the sequence is GPNMGGKS.

This sequence belongs to the DNA mismatch repair MutS family.

Its function is as follows. This protein is involved in the repair of mismatches in DNA. It is possible that it carries out the mismatch recognition step. This protein has a weak ATPase activity. The sequence is that of DNA mismatch repair protein MutS from Francisella tularensis subsp. tularensis (strain SCHU S4 / Schu 4).